Reading from the N-terminus, the 469-residue chain is MFKRYQHIHFVGIGGIGMSGIAELLLNLGYRVSGSDLKETEITRRLSAMGAAVHLGHRAEHVLGADVVVLSSAISDDNPENRAAREMGKVPVIRRAEMLAELMRLKYSVLVAGAHGKTTTTSMVSTVLARGGLDPTVVIGGKLNAWGTNAKLGNGDFMVAEADESDGTFLLLPPTIAVVTNIDLEHLDFYRDLAHIQETFLQFINKIPFYGQAVLCLEDENIQSILPRVEKRFTTYGFSSQADFQARDVRTSGLFSSYRVHSHGDELGEIEIRIPGRHNVLNSLAAVAVARELDLDWANIQDGLRDMTGVQRRFQIKGEAANVLVIDDYGHHPSEIRAVLQTLADCYPDRRRIVVFQPHRYTRTRALMEQFARCFYHSDVLLVTEIYAASETPIPGVTGERLSQEIASHGHHDLHFCETVESALSRLVKLVKPGDAVITLGAGNIWQVGEWLLAKLKSSGGSGGTGELK.

113 to 119 serves as a coordination point for ATP; sequence GAHGKTT.

It belongs to the MurCDEF family.

Its subcellular location is the cytoplasm. It catalyses the reaction UDP-N-acetyl-alpha-D-muramate + L-alanine + ATP = UDP-N-acetyl-alpha-D-muramoyl-L-alanine + ADP + phosphate + H(+). It functions in the pathway cell wall biogenesis; peptidoglycan biosynthesis. Cell wall formation. This Syntrophobacter fumaroxidans (strain DSM 10017 / MPOB) protein is UDP-N-acetylmuramate--L-alanine ligase.